The sequence spans 198 residues: Methyl-coenzyme M reductase I operon protein C (198 aa).

MCR is composed of three subunits: alpha, beta, and gamma. The function of proteins C and D is not known.

In Methanothermobacter marburgensis (strain ATCC BAA-927 / DSM 2133 / JCM 14651 / NBRC 100331 / OCM 82 / Marburg) (Methanobacterium thermoautotrophicum), this protein is Methyl-coenzyme M reductase I operon protein C (mcrC).